The primary structure comprises 215 residues: Pyrrolidone-carboxylate peptidase (215 aa).

Residues E80, C143, and H167 contribute to the active site.

This sequence belongs to the peptidase C15 family. In terms of assembly, homotetramer.

It localises to the cytoplasm. The catalysed reaction is Release of an N-terminal pyroglutamyl group from a polypeptide, the second amino acid generally not being Pro.. In terms of biological role, removes 5-oxoproline from various penultimate amino acid residues except L-proline. This chain is Pyrrolidone-carboxylate peptidase, found in Bacillus cytotoxicus (strain DSM 22905 / CIP 110041 / 391-98 / NVH 391-98).